We begin with the raw amino-acid sequence, 759 residues long: Catalase-peroxidase (759 aa).

The tract at residues 1–24 is disordered; the sequence is MTQDKCPFKEQSSQPNFAGGGTSN. Positions 96 to 242 form a cross-link, tryptophyl-tyrosyl-methioninium (Trp-Tyr) (with M-268); sequence WHSAGTYRVF…LAAAHMGLIY (147 aa). Histidine 97 functions as the Proton acceptor in the catalytic mechanism. The segment at residues 242 to 268 is a cross-link (tryptophyl-tyrosyl-methioninium (Tyr-Met) (with W-96)); it reads YVNPEGPDGNPDPVAAAHDIRDTFGRM. Heme b is bound at residue histidine 283.

The protein belongs to the peroxidase family. Peroxidase/catalase subfamily. In terms of assembly, homodimer or homotetramer. Heme b serves as cofactor. Formation of the three residue Trp-Tyr-Met cross-link is important for the catalase, but not the peroxidase activity of the enzyme.

It is found in the cytoplasm. It carries out the reaction H2O2 + AH2 = A + 2 H2O. The catalysed reaction is 2 H2O2 = O2 + 2 H2O. Bifunctional enzyme with both catalase and broad-spectrum peroxidase activity. In Aspergillus fumigatus (strain CBS 144.89 / FGSC A1163 / CEA10) (Neosartorya fumigata), this protein is Catalase-peroxidase.